The chain runs to 506 residues: Sodium-coupled neutral amino acid symporter 2 (506 aa).

The segment at 1–23 is disordered; it reads MKKAEMGRFNISPDEDSSSYSSN. The Cytoplasmic portion of the chain corresponds to 1 to 76; that stretch reads MKKAEMGRFN…HPGTTSFGMS (76 aa). The regulates protein turnover upon amino acid deprivation stretch occupies residues 1–96; that stretch reads MKKAEMGRFN…SGILGLSYAM (96 aa). Phosphoserine occurs at positions 12, 21, 22, and 55. The chain crosses the membrane as a helical span at residues 77-96; the sequence is VFNLSNAIVGSGILGLSYAM. Asn82 contacts Na(+). Topologically, residues 97 to 102 are extracellular; sequence ANTGIA. Residues 103–123 traverse the membrane as a helical segment; it reads LFIILLTFVSIFSLYSVHLLL. The Cytoplasmic segment spans residues 124 to 158; that stretch reads KTANEGGSLLYEQLGHKAFGMVGKLTASGSITMQN. A helical membrane pass occupies residues 159–177; it reads IGAMSSYLFIVKYELPLVI. Residues 178 to 188 are Extracellular-facing; sequence QALMNIEDTNG. Residues 189–209 traverse the membrane as a helical segment; the sequence is LWYLNGDYLVLLVSLVLILPL. At 210-217 the chain is on the cytoplasmic side; sequence SLLRNLGY. Residues 218 to 238 traverse the membrane as a helical segment; the sequence is LGYTSGLSLLCMMFFLIVVIF. Residues 239–292 lie on the Extracellular side of the membrane; it reads KKFQISCPAEIAFLVNETVNSSLTQPATFLPDMGFNRTESDSCQPRYFIFNSQT. Cys245 and Cys281 form a disulfide bridge. 2 N-linked (GlcNAc...) asparagine glycosylation sites follow: Asn258 and Asn274. A helical membrane pass occupies residues 293 to 313; that stretch reads VYAVPILTFSFVCHPAILPIY. At 314-329 the chain is on the cytoplasmic side; sequence EELKGRSRRRMMNVSK. The chain crosses the membrane as a helical span at residues 330–350; that stretch reads ISFFAMFLMYLLAALFGYLTF. The Extracellular segment spans residues 351-371; sequence YGHVESELLHTYSSVMETDIL. A helical transmembrane segment spans residues 372–392; the sequence is LLIVRLAVLVAVTLTVPVVIF. Residue Thr386 coordinates Na(+). Over 393–413 the chain is Cytoplasmic; it reads PIRSSITHLLCASKEFSWWRH. The helical transmembrane segment at 414–434 threads the bilayer; sequence SVITVSILVFTNLLVIFVPNI. Residues 435-436 are Extracellular-facing; sequence RD. The helical transmembrane segment at 437–457 threads the bilayer; sequence IFGFIGASAAAMLIFILPSAF. The Cytoplasmic segment spans residues 458–472; it reads YIKLVKKEPMKSVQK. A helical membrane pass occupies residues 473–495; the sequence is IGAMFFLLSGIVVMTGSMALIVL. Over 496 to 506 the chain is Extracellular; the sequence is DWVHNAPGGGH.

Belongs to the amino acid/polyamine transporter 2 family. Polyubiquitination by NEDD4L regulates the degradation and the activity of SLC38A2.

It is found in the cell membrane. The catalysed reaction is L-alanine(in) + Na(+)(in) = L-alanine(out) + Na(+)(out). It carries out the reaction glycine(in) + Na(+)(in) = glycine(out) + Na(+)(out). It catalyses the reaction L-serine(in) + Na(+)(in) = L-serine(out) + Na(+)(out). The enzyme catalyses L-proline(in) + Na(+)(in) = L-proline(out) + Na(+)(out). The catalysed reaction is L-methionine(in) + Na(+)(in) = L-methionine(out) + Na(+)(out). It carries out the reaction L-histidine(in) + Na(+)(in) = L-histidine(out) + Na(+)(out). It catalyses the reaction L-asparagine(in) + Na(+)(in) = L-asparagine(out) + Na(+)(out). The enzyme catalyses L-glutamine(in) + Na(+)(in) = L-glutamine(out) + Na(+)(out). The catalysed reaction is L-threonine(in) + Na(+)(in) = L-threonine(out) + Na(+)(out). It carries out the reaction L-leucine(in) + Na(+)(in) = L-leucine(out) + Na(+)(out). It catalyses the reaction L-phenylalanine(in) + Na(+)(in) = L-phenylalanine(out) + Na(+)(out). Inhibited by N-methyl-D-glucamine. Inhibited by choline. Allosteric regulation of sodium ions binding by pH. Functionally, symporter that cotransports neutral amino acids and sodium ions from the extracellular to the intracellular side of the cell membrane. The transport is pH-sensitive, Li(+)-intolerant, electrogenic, driven by the Na(+) electrochemical gradient and cotransports of neutral amino acids and sodium ions with a stoichiometry of 1:1. May function in the transport of amino acids at the blood-brain barrier. May function in the transport of amino acids in the supply of maternal nutrients to the fetus through the placenta. Maintains a key metabolic glutamine/glutamate balance underpinning retrograde signaling by dendritic release of the neurotransmitter glutamate. Transports L-proline in differentiating osteoblasts for the efficient synthesis of proline-enriched proteins and provides proline essential for osteoblast differentiation and bone formation during bone development. The sequence is that of Sodium-coupled neutral amino acid symporter 2 from Bos taurus (Bovine).